A 511-amino-acid chain; its full sequence is Anthranilate synthase component 1 (511 aa).

A disordered region spans residues 1-36 (MTTHAAEAPTTDPQGAPGSQKTPDATEAEEAARATV). Over residues 11–23 (TDPQGAPGSQKTP) the composition is skewed to polar residues. L-tryptophan is bound by residues S84 and 292–294 (PYM). Position 328–329 (328–329 (GT)) interacts with chorismate. E355 contacts Mg(2+). Residues Y443, R463, 477–479 (GAG), and G479 contribute to the chorismate site. Residue E492 participates in Mg(2+) binding.

Belongs to the anthranilate synthase component I family. In terms of assembly, heterotetramer consisting of two non-identical subunits: a beta subunit (TrpG) and a large alpha subunit (TrpE). The cofactor is Mg(2+).

It carries out the reaction chorismate + L-glutamine = anthranilate + pyruvate + L-glutamate + H(+). It participates in amino-acid biosynthesis; L-tryptophan biosynthesis; L-tryptophan from chorismate: step 1/5. Its activity is regulated as follows. Feedback inhibited by tryptophan. Functionally, part of a heterotetrameric complex that catalyzes the two-step biosynthesis of anthranilate, an intermediate in the biosynthesis of L-tryptophan. In the first step, the glutamine-binding beta subunit (TrpG) of anthranilate synthase (AS) provides the glutamine amidotransferase activity which generates ammonia as a substrate that, along with chorismate, is used in the second step, catalyzed by the large alpha subunit of AS (TrpE) to produce anthranilate. In the absence of TrpG, TrpE can synthesize anthranilate directly from chorismate and high concentrations of ammonia. The sequence is that of Anthranilate synthase component 1 (trpE) from Streptomyces coelicolor (strain ATCC BAA-471 / A3(2) / M145).